The chain runs to 843 residues: Protein P (843 aa).

The terminal protein domain (TP) stretch occupies residues 1-177 (MPLSYQHFRK…FCGSPYSWEQ (177 aa)). A spacer region spans residues 178–346 (DLQHGRLVFQ…YCLSHIVNLI (169 aa)). Residues 219-269 (RKSRLGPQPAQGQLAGRQQGGSGSIRARVHPSPWGTVGVEPSGSGPTHNCA) form a disordered region. The span at 223-235 (LGPQPAQGQLAGR) shows a compositional bias: low complexity. Residues 347 to 690 (EDWGPCTEHG…YLNLYPVARQ (344 aa)) are polymerase/reverse transcriptase domain (RT). The Reverse transcriptase domain occupies 357–600 (EHRIRTPRTP…YSLNFMGYVI (244 aa)). Residues D429, D551, and D552 each contribute to the Mg(2+) site.

It belongs to the hepadnaviridae P protein family.

The catalysed reaction is DNA(n) + a 2'-deoxyribonucleoside 5'-triphosphate = DNA(n+1) + diphosphate. It catalyses the reaction Endonucleolytic cleavage to 5'-phosphomonoester.. Activated by host HSP70 and HSP40 in vitro to be able to bind the epsilon loop of the pgRNA. Because deletion of the RNase H region renders the protein partly chaperone-independent, the chaperones may be needed indirectly to relieve occlusion of the RNA-binding site by this domain. Inhibited by several reverse-transcriptase inhibitors: Lamivudine, Adefovir and Entecavir. Its function is as follows. Multifunctional enzyme that converts the viral RNA genome into dsDNA in viral cytoplasmic capsids. This enzyme displays a DNA polymerase activity that can copy either DNA or RNA templates, and a ribonuclease H (RNase H) activity that cleaves the RNA strand of RNA-DNA heteroduplexes in a partially processive 3'- to 5'-endonucleasic mode. Neo-synthesized pregenomic RNA (pgRNA) are encapsidated together with the P protein, and reverse-transcribed inside the nucleocapsid. Initiation of reverse-transcription occurs first by binding the epsilon loop on the pgRNA genome, and is initiated by protein priming, thereby the 5'-end of (-)DNA is covalently linked to P protein. Partial (+)DNA is synthesized from the (-)DNA template and generates the relaxed circular DNA (RC-DNA) genome. After budding and infection, the RC-DNA migrates in the nucleus, and is converted into a plasmid-like covalently closed circular DNA (cccDNA). The activity of P protein does not seem to be necessary for cccDNA generation, and is presumably released from (+)DNA by host nuclear DNA repair machinery. The chain is Protein P from Hepatitis B virus genotype B2 subtype adw (isolate China/patient4/1996) (HBV-B).